Consider the following 482-residue polypeptide: tRNA sulfurtransferase (482 aa).

The THUMP domain occupies 61–165; it reads LAIRDALTRI…DDRLLLIKGR (105 aa). Residues 183–184, Lys-265, Gly-287, and Gln-296 each bind ATP; that span reads LI. Cys-344 and Cys-456 form a disulfide bridge. In terms of domain architecture, Rhodanese spans 404–482; that stretch reads FGPNDVILDI…GFNNVKVYRP (79 aa). The Cysteine persulfide intermediate role is filled by Cys-456.

This sequence belongs to the ThiI family.

The protein resides in the cytoplasm. The enzyme catalyses [ThiI sulfur-carrier protein]-S-sulfanyl-L-cysteine + a uridine in tRNA + 2 reduced [2Fe-2S]-[ferredoxin] + ATP + H(+) = [ThiI sulfur-carrier protein]-L-cysteine + a 4-thiouridine in tRNA + 2 oxidized [2Fe-2S]-[ferredoxin] + AMP + diphosphate. The catalysed reaction is [ThiS sulfur-carrier protein]-C-terminal Gly-Gly-AMP + S-sulfanyl-L-cysteinyl-[cysteine desulfurase] + AH2 = [ThiS sulfur-carrier protein]-C-terminal-Gly-aminoethanethioate + L-cysteinyl-[cysteine desulfurase] + A + AMP + 2 H(+). It functions in the pathway cofactor biosynthesis; thiamine diphosphate biosynthesis. Catalyzes the ATP-dependent transfer of a sulfur to tRNA to produce 4-thiouridine in position 8 of tRNAs, which functions as a near-UV photosensor. Also catalyzes the transfer of sulfur to the sulfur carrier protein ThiS, forming ThiS-thiocarboxylate. This is a step in the synthesis of thiazole, in the thiamine biosynthesis pathway. The sulfur is donated as persulfide by IscS. The sequence is that of tRNA sulfurtransferase from Escherichia coli O139:H28 (strain E24377A / ETEC).